Consider the following 115-residue polypeptide: UPF0127 protein PH1112 (115 aa).

The protein belongs to the UPF0127 family.

This Pyrococcus horikoshii (strain ATCC 700860 / DSM 12428 / JCM 9974 / NBRC 100139 / OT-3) protein is UPF0127 protein PH1112.